The chain runs to 254 residues: Urease accessory protein UreD (254 aa).

The protein belongs to the UreD family. In terms of assembly, ureD, UreF and UreG form a complex that acts as a GTP-hydrolysis-dependent molecular chaperone, activating the urease apoprotein by helping to assemble the nickel containing metallocenter of UreC. The UreE protein probably delivers the nickel.

The protein resides in the cytoplasm. Its function is as follows. Required for maturation of urease via the functional incorporation of the urease nickel metallocenter. The protein is Urease accessory protein UreD of Streptomyces coelicolor (strain ATCC BAA-471 / A3(2) / M145).